We begin with the raw amino-acid sequence, 416 residues long: Gamma-glutamyl phosphate reductase (416 aa).

This sequence belongs to the gamma-glutamyl phosphate reductase family.

The protein resides in the cytoplasm. The enzyme catalyses L-glutamate 5-semialdehyde + phosphate + NADP(+) = L-glutamyl 5-phosphate + NADPH + H(+). It participates in amino-acid biosynthesis; L-proline biosynthesis; L-glutamate 5-semialdehyde from L-glutamate: step 2/2. In terms of biological role, catalyzes the NADPH-dependent reduction of L-glutamate 5-phosphate into L-glutamate 5-semialdehyde and phosphate. The product spontaneously undergoes cyclization to form 1-pyrroline-5-carboxylate. The chain is Gamma-glutamyl phosphate reductase from Streptococcus thermophilus (strain CNRZ 1066).